The primary structure comprises 284 residues: MTELIDGKALSQKMQAELGRKVERLKEQHGIIPGLAVILVGDNPASQVYVRNKERSALEAGFKSETLRLSESISQEELIDIIHQYNEDKSIHGILVQLPLPQHINDKKIILAIDPKKDVDGFHPMNTGHLWSGRPMMVPCTPAGIMEMFREYHVDLEGKHAVIIGRSNIVGKPMAQLLLDKNATVTLTHSRTRNLSEVTKEADILIVAIGQGHFVTKDFVKEGAVVIDVGMNRDENGKLIGDVVFEQVAEVASMITPVPGGVGPMTITMLLEQTYQAALRSVSL.

NADP(+) contacts are provided by residues 165–167 and serine 190; that span reads GRS.

Belongs to the tetrahydrofolate dehydrogenase/cyclohydrolase family. As to quaternary structure, homodimer.

The catalysed reaction is (6R)-5,10-methylene-5,6,7,8-tetrahydrofolate + NADP(+) = (6R)-5,10-methenyltetrahydrofolate + NADPH. It carries out the reaction (6R)-5,10-methenyltetrahydrofolate + H2O = (6R)-10-formyltetrahydrofolate + H(+). Its pathway is one-carbon metabolism; tetrahydrofolate interconversion. In terms of biological role, catalyzes the oxidation of 5,10-methylenetetrahydrofolate to 5,10-methenyltetrahydrofolate and then the hydrolysis of 5,10-methenyltetrahydrofolate to 10-formyltetrahydrofolate. The sequence is that of Bifunctional protein FolD from Streptococcus agalactiae serotype Ia (strain ATCC 27591 / A909 / CDC SS700).